Reading from the N-terminus, the 483-residue chain is Protein nucleotidyltransferase YdiU (483 aa).

ATP contacts are provided by Gly81, Gly83, Arg84, Lys103, Asp115, Gly116, Arg166, and Arg173. Asp244 (proton acceptor) is an active-site residue. Asn245 and Asp254 together coordinate Mg(2+). Asp254 lines the ATP pocket.

This sequence belongs to the SELO family. Mg(2+) is required as a cofactor. It depends on Mn(2+) as a cofactor.

It carries out the reaction L-seryl-[protein] + ATP = 3-O-(5'-adenylyl)-L-seryl-[protein] + diphosphate. The enzyme catalyses L-threonyl-[protein] + ATP = 3-O-(5'-adenylyl)-L-threonyl-[protein] + diphosphate. It catalyses the reaction L-tyrosyl-[protein] + ATP = O-(5'-adenylyl)-L-tyrosyl-[protein] + diphosphate. The catalysed reaction is L-histidyl-[protein] + UTP = N(tele)-(5'-uridylyl)-L-histidyl-[protein] + diphosphate. It carries out the reaction L-seryl-[protein] + UTP = O-(5'-uridylyl)-L-seryl-[protein] + diphosphate. The enzyme catalyses L-tyrosyl-[protein] + UTP = O-(5'-uridylyl)-L-tyrosyl-[protein] + diphosphate. Nucleotidyltransferase involved in the post-translational modification of proteins. It can catalyze the addition of adenosine monophosphate (AMP) or uridine monophosphate (UMP) to a protein, resulting in modifications known as AMPylation and UMPylation. The sequence is that of Protein nucleotidyltransferase YdiU from Shewanella halifaxensis (strain HAW-EB4).